We begin with the raw amino-acid sequence, 259 residues long: Thiazole synthase (259 aa).

The active-site Schiff-base intermediate with DXP is the Lys95. 1-deoxy-D-xylulose 5-phosphate-binding positions include Gly156, 182-183 (AG), and 204-205 (NT).

Belongs to the ThiG family. In terms of assembly, homotetramer. Forms heterodimers with either ThiH or ThiS.

The protein resides in the cytoplasm. It catalyses the reaction [ThiS sulfur-carrier protein]-C-terminal-Gly-aminoethanethioate + 2-iminoacetate + 1-deoxy-D-xylulose 5-phosphate = [ThiS sulfur-carrier protein]-C-terminal Gly-Gly + 2-[(2R,5Z)-2-carboxy-4-methylthiazol-5(2H)-ylidene]ethyl phosphate + 2 H2O + H(+). It functions in the pathway cofactor biosynthesis; thiamine diphosphate biosynthesis. Functionally, catalyzes the rearrangement of 1-deoxy-D-xylulose 5-phosphate (DXP) to produce the thiazole phosphate moiety of thiamine. Sulfur is provided by the thiocarboxylate moiety of the carrier protein ThiS. In vitro, sulfur can be provided by H(2)S. This is Thiazole synthase from Proteus mirabilis (strain HI4320).